A 513-amino-acid chain; its full sequence is Zinc finger CCCH-type with G patch domain-containing protein (513 aa).

At methionine 1 the chain carries N-acetylmethionine. The disordered stretch occupies residues proline 92 to serine 131. The span at glycine 115–glycine 126 shows a compositional bias: acidic residues. The C3H1-type zinc-finger motif lies at lysine 176–valine 202. Residues leucine 267–alanine 298 form a disordered region. Phosphoserine is present on residues serine 278 and serine 355. A G-patch domain is found at threonine 315–glutamate 361. Disordered regions lie at residues threonine 367–arginine 394 and glutamine 493–phenylalanine 513. A compositionally biased stretch (basic and acidic residues) spans leucine 497–phenylalanine 513.

Interacts with CHD4/Mi-2; the interaction is direct.

The protein resides in the nucleus. Functionally, transcription repressor that specifically binds the 5'-GGAG[GA]A[GA]A-3' consensus sequence. Represses transcription by recruiting the chromatin multiprotein complex NuRD to target promoters. Negatively regulates expression of EGFR, a gene involved in cell proliferation, survival and migration. Its ability to repress genes of the EGFR pathway suggest it may act as a tumor suppressor. This chain is Zinc finger CCCH-type with G patch domain-containing protein (ZGPAT), found in Ovis aries (Sheep).